Here is a 188-residue protein sequence, read N- to C-terminus: dCTP deaminase (188 aa).

DCTP is bound by residues 111–116 (KSTYAR), 135–137 (TLE), glutamine 156, tyrosine 170, and glutamine 180. The Proton donor/acceptor role is filled by glutamate 137.

It belongs to the dCTP deaminase family. Homotrimer.

It carries out the reaction dCTP + H2O + H(+) = dUTP + NH4(+). Its pathway is pyrimidine metabolism; dUMP biosynthesis; dUMP from dCTP (dUTP route): step 1/2. Catalyzes the deamination of dCTP to dUTP. The sequence is that of dCTP deaminase from Pseudomonas fluorescens (strain Pf0-1).